The following is a 119-amino-acid chain: NADH-quinone oxidoreductase subunit A (119 aa).

Transmembrane regions (helical) follow at residues 7–27 (YPVLLFLLVGTGLGIALVSIG), 63–83 (LVAILFIIFDLETAFLFPWGV), and 88–108 (IGWPGFSAMMIFLLEFLLGFA).

This sequence belongs to the complex I subunit 3 family. In terms of assembly, NDH-1 is composed of 14 different subunits. Subunits NuoA, H, J, K, L, M, N constitute the membrane sector of the complex.

The protein localises to the cell inner membrane. It catalyses the reaction a quinone + NADH + 5 H(+)(in) = a quinol + NAD(+) + 4 H(+)(out). Functionally, NDH-1 shuttles electrons from NADH, via FMN and iron-sulfur (Fe-S) centers, to quinones in the respiratory chain. The immediate electron acceptor for the enzyme in this species is believed to be ubiquinone. Couples the redox reaction to proton translocation (for every two electrons transferred, four hydrogen ions are translocated across the cytoplasmic membrane), and thus conserves the redox energy in a proton gradient. This chain is NADH-quinone oxidoreductase subunit A, found in Burkholderia vietnamiensis (strain G4 / LMG 22486) (Burkholderia cepacia (strain R1808)).